A 495-amino-acid polypeptide reads, in one-letter code: Catalase (495 aa).

The disordered stretch occupies residues 1–25 (MSNNKKLTSLFGAPVSDRENSMTAG). Residues histidine 55 and asparagine 128 contribute to the active site. Tyrosine 338 contacts heme.

This sequence belongs to the catalase family. As to quaternary structure, homodimer. Heme serves as cofactor.

It carries out the reaction 2 H2O2 = O2 + 2 H2O. Its function is as follows. Decomposes hydrogen peroxide into water and oxygen; serves to protect cells from the toxic effects of hydrogen peroxide. The polypeptide is Catalase (katA) (Staphylococcus saprophyticus subsp. saprophyticus (strain ATCC 15305 / DSM 20229 / NCIMB 8711 / NCTC 7292 / S-41)).